The chain runs to 339 residues: S-adenosylmethionine:tRNA ribosyltransferase-isomerase (339 aa).

It belongs to the QueA family. In terms of assembly, monomer.

It localises to the cytoplasm. It catalyses the reaction 7-aminomethyl-7-carbaguanosine(34) in tRNA + S-adenosyl-L-methionine = epoxyqueuosine(34) in tRNA + adenine + L-methionine + 2 H(+). It participates in tRNA modification; tRNA-queuosine biosynthesis. In terms of biological role, transfers and isomerizes the ribose moiety from AdoMet to the 7-aminomethyl group of 7-deazaguanine (preQ1-tRNA) to give epoxyqueuosine (oQ-tRNA). The sequence is that of S-adenosylmethionine:tRNA ribosyltransferase-isomerase from Campylobacter fetus subsp. fetus (strain 82-40).